The sequence spans 377 residues: Succinyl-diaminopimelate desuccinylase (377 aa).

Zn(2+) is bound at residue histidine 68. Residue aspartate 70 is part of the active site. Aspartate 101 provides a ligand contact to Zn(2+). The Proton acceptor role is filled by glutamate 135. Zn(2+) contacts are provided by glutamate 136, glutamate 164, and histidine 350.

This sequence belongs to the peptidase M20A family. DapE subfamily. As to quaternary structure, homodimer. It depends on Zn(2+) as a cofactor. Co(2+) is required as a cofactor.

It carries out the reaction N-succinyl-(2S,6S)-2,6-diaminopimelate + H2O = (2S,6S)-2,6-diaminopimelate + succinate. It participates in amino-acid biosynthesis; L-lysine biosynthesis via DAP pathway; LL-2,6-diaminopimelate from (S)-tetrahydrodipicolinate (succinylase route): step 3/3. In terms of biological role, catalyzes the hydrolysis of N-succinyl-L,L-diaminopimelic acid (SDAP), forming succinate and LL-2,6-diaminopimelate (DAP), an intermediate involved in the bacterial biosynthesis of lysine and meso-diaminopimelic acid, an essential component of bacterial cell walls. The protein is Succinyl-diaminopimelate desuccinylase of Aliivibrio fischeri (strain MJ11) (Vibrio fischeri).